A 132-amino-acid polypeptide reads, in one-letter code: uncharacterized protein (132 aa).

4 consecutive transmembrane segments (helical) span residues 15 to 37 (FPEY…LLLY), 49 to 71 (AFIP…LRLF), 81 to 103 (VILT…LALV), and 110 to 129 (LAAT…MAFV).

The protein localises to the cell membrane. This is an uncharacterized protein from Archaeoglobus fulgidus (strain ATCC 49558 / DSM 4304 / JCM 9628 / NBRC 100126 / VC-16).